A 515-amino-acid polypeptide reads, in one-letter code: Vacuolar fusion protein CCZ1 homolog A (515 aa).

Belongs to the CCZ1 family. Interacts with MON1.

It localises to the endosome. Its subcellular location is the prevacuolar compartment. In terms of biological role, plays an important role in membrane trafficking through the secretory apparatus. In complex with MON1, acts as a guanine exchange factor (GEF) for RABG3F of the Rab7 protein family. Promotes the exchange of GDP to GTP, converting RABG3F from an inactive GDP-bound form into an active GTP-bound form. The RABG3F active form is involved in protein trafficking from prevacuolar compartments (PVCs) to vacuoles. May serve as a linker between Rab5 and Rab7 protein families in PVCs and mediate PVC maturation. The protein is Vacuolar fusion protein CCZ1 homolog A of Arabidopsis thaliana (Mouse-ear cress).